The following is a 292-amino-acid chain: Small ribosomal subunit biogenesis GTPase RsgA (292 aa).

In terms of domain architecture, CP-type G spans 64–221 (RSELFRPAVA…LVDTPGFSSL (158 aa)). GTP-binding positions include 113 to 116 (NKMD) and 164 to 172 (GPSGVGKST). Zn(2+)-binding residues include C245, C250, H252, and C258.

This sequence belongs to the TRAFAC class YlqF/YawG GTPase family. RsgA subfamily. In terms of assembly, monomer. Associates with 30S ribosomal subunit, binds 16S rRNA. Zn(2+) is required as a cofactor.

The protein resides in the cytoplasm. Its function is as follows. One of several proteins that assist in the late maturation steps of the functional core of the 30S ribosomal subunit. Helps release RbfA from mature subunits. May play a role in the assembly of ribosomal proteins into the subunit. Circularly permuted GTPase that catalyzes slow GTP hydrolysis, GTPase activity is stimulated by the 30S ribosomal subunit. The polypeptide is Small ribosomal subunit biogenesis GTPase RsgA (Clostridium botulinum (strain Okra / Type B1)).